Here is a 206-residue protein sequence, read N- to C-terminus: Methylthioribulose-1-phosphate dehydratase (206 aa).

Residues histidine 96 and histidine 98 each coordinate Zn(2+).

The protein belongs to the aldolase class II family. MtnB subfamily. Zn(2+) is required as a cofactor.

The catalysed reaction is 5-(methylsulfanyl)-D-ribulose 1-phosphate = 5-methylsulfanyl-2,3-dioxopentyl phosphate + H2O. Its pathway is amino-acid biosynthesis; L-methionine biosynthesis via salvage pathway; L-methionine from S-methyl-5-thio-alpha-D-ribose 1-phosphate: step 2/6. In terms of biological role, catalyzes the dehydration of methylthioribulose-1-phosphate (MTRu-1-P) into 2,3-diketo-5-methylthiopentyl-1-phosphate (DK-MTP-1-P). The polypeptide is Methylthioribulose-1-phosphate dehydratase (Azotobacter vinelandii (strain DJ / ATCC BAA-1303)).